We begin with the raw amino-acid sequence, 1791 residues long: Protein TIC 214 (1791 aa).

6 consecutive transmembrane segments (helical) span residues I19–G39, F68–L88, P91–H111, V133–L153, V176–I196, and I230–I250. Residues G257–Q271 show a composition bias toward basic and acidic residues. Disordered stretches follow at residues G257–A278 and A1498–E1521.

The protein belongs to the TIC214 family. In terms of assembly, part of the Tic complex.

The protein resides in the plastid. Its subcellular location is the chloroplast inner membrane. Involved in protein precursor import into chloroplasts. May be part of an intermediate translocation complex acting as a protein-conducting channel at the inner envelope. This is Protein TIC 214 from Aethionema grandiflorum (Persian stone-cress).